Reading from the N-terminus, the 63-residue chain is Large ribosomal subunit protein uL30 (63 aa).

The protein belongs to the universal ribosomal protein uL30 family. In terms of assembly, part of the 50S ribosomal subunit.

The protein is Large ribosomal subunit protein uL30 of Rickettsia prowazekii (strain Madrid E).